A 1121-amino-acid chain; its full sequence is Phytochrome 2 (1121 aa).

One can recognise a GAF domain in the interval 214–393 (DIGLLCDTVV…VFGMQLNMEV (180 aa)). Phytochromobilin is bound at residue C319. PAS domains lie at 608-679 (VANE…SQGE) and 742-813 (DYKT…TKFM). Residues 893 to 1113 (YIRQEIKNPL…VVYVELPMAQ (221 aa)) enclose the Histidine kinase domain.

This sequence belongs to the phytochrome family. Homodimer. Contains one covalently linked phytochromobilin chromophore.

Its function is as follows. Regulatory photoreceptor which exists in two forms that are reversibly interconvertible by light: the Pr form that absorbs maximally in the red region of the spectrum and the Pfr form that absorbs maximally in the far-red region. Photoconversion of Pr to Pfr induces an array of morphogenic responses, whereas reconversion of Pfr to Pr cancels the induction of those responses. Pfr controls the expression of a number of nuclear genes including those encoding the small subunit of ribulose-bisphosphate carboxylase, chlorophyll A/B binding protein, protochlorophyllide reductase, rRNA, etc. It also controls the expression of its own gene(s) in a negative feedback fashion. The protein is Phytochrome 2 (PHY2) of Ceratodon purpureus (Fire moss).